Consider the following 452-residue polypeptide: Netrin-5 (452 aa).

A signal peptide spans 1–34; sequence MTDYRTLFSSPGAGSTVTTPITLSLLLLLSQATS. Cystine bridges form between Cys-173-Cys-182, Cys-175-Cys-191, Cys-193-Cys-202, Cys-205-Cys-225, Cys-228-Cys-240, Cys-230-Cys-247, Cys-249-Cys-258, Cys-261-Cys-275, Cys-298-Cys-376, Cys-302-Cys-378, and Cys-317-Cys-438. Laminin EGF-like domains lie at 173-227 and 228-277; these read CQCH…PCLP and CQCH…PCQR. Residues 298 to 438 form the NTR domain; sequence CQGYCNVSVS…LQQKERGGAC (141 aa). Residue Asn-303 is glycosylated (N-linked (GlcNAc...) asparagine).

Its subcellular location is the secreted. In terms of biological role, plays a role in neurogenesis. Prevents motor neuron cell body migration out of the neural tube. The protein is Netrin-5 (Ntn5) of Mus musculus (Mouse).